The primary structure comprises 157 residues: 2-C-methyl-D-erythritol 2,4-cyclodiphosphate synthase (157 aa).

Positions 8, 10, and 42 each coordinate a divalent metal cation. A 4-CDP-2-C-methyl-D-erythritol 2-phosphate-binding site is contributed by 8 to 10 (DVH). Residues 56–58 (DIG), 132–135 (STSE), Phe139, and Arg142 each bind 4-CDP-2-C-methyl-D-erythritol 2-phosphate.

It belongs to the IspF family. Homotrimer. Requires a divalent metal cation as cofactor.

It carries out the reaction 4-CDP-2-C-methyl-D-erythritol 2-phosphate = 2-C-methyl-D-erythritol 2,4-cyclic diphosphate + CMP. It functions in the pathway isoprenoid biosynthesis; isopentenyl diphosphate biosynthesis via DXP pathway; isopentenyl diphosphate from 1-deoxy-D-xylulose 5-phosphate: step 4/6. Involved in the biosynthesis of isopentenyl diphosphate (IPP) and dimethylallyl diphosphate (DMAPP), two major building blocks of isoprenoid compounds. Catalyzes the conversion of 4-diphosphocytidyl-2-C-methyl-D-erythritol 2-phosphate (CDP-ME2P) to 2-C-methyl-D-erythritol 2,4-cyclodiphosphate (ME-CPP) with a corresponding release of cytidine 5-monophosphate (CMP). In Dehalococcoides mccartyi (strain ATCC BAA-2266 / KCTC 15142 / 195) (Dehalococcoides ethenogenes (strain 195)), this protein is 2-C-methyl-D-erythritol 2,4-cyclodiphosphate synthase.